We begin with the raw amino-acid sequence, 349 residues long: Protein RecA (349 aa).

An ATP-binding site is contributed by Gly-65–Thr-72.

It belongs to the RecA family.

It localises to the cytoplasm. Its function is as follows. Can catalyze the hydrolysis of ATP in the presence of single-stranded DNA, the ATP-dependent uptake of single-stranded DNA by duplex DNA, and the ATP-dependent hybridization of homologous single-stranded DNAs. It interacts with LexA causing its activation and leading to its autocatalytic cleavage. The sequence is that of Protein RecA from Azotobacter vinelandii (strain DJ / ATCC BAA-1303).